The sequence spans 349 residues: 4-hydroxythreonine-4-phosphate dehydrogenase (349 aa).

Thr135 is a substrate binding site. Positions 170, 215, and 276 each coordinate a divalent metal cation. Substrate contacts are provided by Lys284, Asn293, and Arg302.

This sequence belongs to the PdxA family. In terms of assembly, homodimer. Requires a divalent metal cation as cofactor.

The protein resides in the cytoplasm. It carries out the reaction 4-(phosphooxy)-L-threonine + NAD(+) = 3-amino-2-oxopropyl phosphate + CO2 + NADH. Its pathway is cofactor biosynthesis; pyridoxine 5'-phosphate biosynthesis; pyridoxine 5'-phosphate from D-erythrose 4-phosphate: step 4/5. In terms of biological role, catalyzes the NAD(P)-dependent oxidation of 4-(phosphooxy)-L-threonine (HTP) into 2-amino-3-oxo-4-(phosphooxy)butyric acid which spontaneously decarboxylates to form 3-amino-2-oxopropyl phosphate (AHAP). This is 4-hydroxythreonine-4-phosphate dehydrogenase from Synechococcus sp. (strain JA-3-3Ab) (Cyanobacteria bacterium Yellowstone A-Prime).